The following is an 815-amino-acid chain: Dual specificity tyrosine-phosphorylation-regulated kinase mbk-2 (815 aa).

Disordered regions lie at residues 1 to 49 (MAAL…NYTR), 67 to 146 (PSSF…PLGT), 185 to 204 (YEFPSGQAQQQRRLGGSQQH), and 298 to 395 (ALPS…FRPE). Polar residues-rich tracts occupy residues 7-25 (FTRNSRSYGQQPIDVTQQG) and 40-49 (SKMSNINYTR). Positions 68–78 (SSFSGASSSSS) are enriched in low complexity. Composition is skewed to polar residues over residues 119–140 (SGNTLTRSYHQPSSTNSSTSNL) and 190–204 (GQAQQQRRLGGSQQH). Low complexity predominate over residues 301-316 (SVGTSSSNGSSNSSSG). Positions 325 to 351 (LMTQSIGGPNKHLSASHSTLNTASTHD) are enriched in polar residues. A Phosphoserine; by cdk-1 modification is found at Ser361. The segment covering 363-391 (SNESLSRSHTSSSGGSQGGHNSNSGSNSG) has biased composition (low complexity). In terms of domain architecture, Protein kinase spans 460-773 (YEVLKVIGKG…PAQALKHKWL (314 aa)). ATP-binding positions include 466–474 (IGKGSFGQV) and Lys489. Asp586 functions as the Proton acceptor in the catalytic mechanism. Tyr620 is subject to Phosphotyrosine; by autocatalysis.

Belongs to the protein kinase superfamily. CMGC Ser/Thr protein kinase family. MNB/DYRK subfamily. In terms of assembly, part of a complex, consisting of pseudophosphatases egg-3, egg-4, egg-5 and kinase mbk-2. Interacts (via Tyr-618 and Tyr-620) with egg-4 (via tyrosine-protein phosphatase domain) and egg-5 (via tyrosine-protein phosphatase domain); mbk-2 tyrosine phosphorylation enhances the interaction. The interaction inhibits mbk-2 kinase activity and is required for mbk-2 oocyte cortex localization. Interacts (via N-terminus) with egg-3 (via tyrosine-protein phosphatase domain); the interaction does not affect mbk-2 kinase activity, is enhanced by mbk-2 tyrosine phosphorylation status and requires prior binding of mbk-2 to egg-4 and egg-5. Mg(2+) is required as a cofactor. Post-translationally, autophosphorylated.

Its subcellular location is the cytoplasm. The protein localises to the cell cortex. The enzyme catalyses L-seryl-[protein] + ATP = O-phospho-L-seryl-[protein] + ADP + H(+). It catalyses the reaction L-threonyl-[protein] + ATP = O-phospho-L-threonyl-[protein] + ADP + H(+). The catalysed reaction is L-tyrosyl-[protein] + ATP = O-phospho-L-tyrosyl-[protein] + ADP + H(+). Its activity is regulated as follows. Activated during oocyte maturation by phosphorylation on Ser-361 by cdk-1. The pseudotyrosine phosphatases egg-4 and egg-5 sequester activated mbk-2 until the meiotic divisions and inhibit mbk-2 kinase activity directly, using a mixed-inhibition mechanism that does not involve tyrosine dephosphorylation. Its function is as follows. Required for oocyte-to-zygote transition in which it phosphorylates oocyte proteins, including mei-1, oma-1, oma-2, mex-5, and mex-6, modifying their activity and/or stability following meiosis. Through phosphorylation of P granule components including meg-1, promotes the disassembly of zygotic P granules in the anterior cytoplasm during zygote polarization, and thus plays a role in P granule distribution and segregation in early stage embryos following meiosis. Functions in both spindle positioning and in the posterior localization of cytoplasmic determinants, including pie-1, pos-1, and pgl-1, in early embryos. Involved in the asymmetric distribution of plk-1 at the 2-cell embryonic stage. This is Dual specificity tyrosine-phosphorylation-regulated kinase mbk-2 from Caenorhabditis briggsae.